The primary structure comprises 201 residues: 3-isopropylmalate dehydratase small subunit (201 aa).

Belongs to the LeuD family. LeuD type 1 subfamily. In terms of assembly, heterodimer of LeuC and LeuD.

The enzyme catalyses (2R,3S)-3-isopropylmalate = (2S)-2-isopropylmalate. The protein operates within amino-acid biosynthesis; L-leucine biosynthesis; L-leucine from 3-methyl-2-oxobutanoate: step 2/4. Its function is as follows. Catalyzes the isomerization between 2-isopropylmalate and 3-isopropylmalate, via the formation of 2-isopropylmaleate. The polypeptide is 3-isopropylmalate dehydratase small subunit (Roseobacter denitrificans (strain ATCC 33942 / OCh 114) (Erythrobacter sp. (strain OCh 114))).